The sequence spans 865 residues: Carbohydrate-responsive element-binding protein (865 aa).

Disordered regions lie at residues 15–41 (PRVV…AGGL) and 53–77 (MVSS…LADF). A phosphoserine mark is found at Ser-20, Ser-23, and Ser-25. Thr-27 is modified (phosphothreonine). At Ser-196 the chain carries Phosphoserine. Disordered stretches follow at residues 334–392 (GILG…TKMP) and 500–653 (QPRC…LSRG). A compositionally biased stretch (polar residues) spans 351–368 (GMTPLSGNTRLQARNSCS). Positions 515–533 (ASPPTLTSATASPTATATA) are enriched in low complexity. Residue Ser-568 is modified to Phosphoserine; by AMPK. The span at 583 to 597 (PPIPAPTPPRPPPGP) shows a compositional bias: pro residues. 3 positions are modified to phosphoserine: Ser-615, Ser-627, and Ser-644. A bHLH domain is found at 662–716 (NRRITHISAEQKRRFNIKLGFDTLHGLVSTLSAQPSLKVSKATTLQKTAEYILML). Residues 716–737 (LQQERAAMQEEAQQLRDEIEEL) are leucine-zipper.

Binds DNA as a heterodimer with TCFL4/MLX. Post-translationally, phosphorylation at Ser-568 by AMPK inactivates the DNA-binding activity.

The protein localises to the nucleus. Its function is as follows. Transcriptional repressor. Binds to the canonical and non-canonical E box sequences 5'-CACGTG-3'. This Rattus norvegicus (Rat) protein is Carbohydrate-responsive element-binding protein (Mlxipl).